Here is a 283-residue protein sequence, read N- to C-terminus: Glutamate racemase (283 aa).

Residues 28-29 and 60-61 each bind substrate; these read DS and YG. The Proton donor/acceptor role is filled by Cys92. Residue 93-94 participates in substrate binding; that stretch reads NS. The active-site Proton donor/acceptor is the Cys204. Position 205–206 (205–206) interacts with substrate; the sequence is TH.

The protein belongs to the aspartate/glutamate racemases family.

The enzyme catalyses L-glutamate = D-glutamate. Its pathway is cell wall biogenesis; peptidoglycan biosynthesis. Its function is as follows. Provides the (R)-glutamate required for cell wall biosynthesis. In Erwinia tasmaniensis (strain DSM 17950 / CFBP 7177 / CIP 109463 / NCPPB 4357 / Et1/99), this protein is Glutamate racemase.